A 528-amino-acid chain; its full sequence is MPTPDATTPQAKGFRRAVSELDAKQAEAIMVRGQGAPGPSLTGSPWPGTAAPAASYTPTPRSPRFIGRRQSLIEDARKEREAAVAAAAAAVPSEPGDPLEAVAFEEKEGKAVLNLLFSPRATKPSALSRAVKVFETFEAKIHHLETRPAQRPRAGGPHLEYFVRLEVRRGDLAALLSGVRQVSEDVRSPAGPKVPWFPRKVSELDKCHHLVTKFDPDLDLDHPGFSDQVYRQRRKLIAEIAFQYRHGDPIPRVEYTAEEIATWKEVYTTLKGLYATHACGEHLEAFALLERFSGYREDNIPQLEDVSRFLKERTGFQLRPVAGLLSARDFLASLAFRVFQCTQYIRHASSPMHSPEPDCCHELLGHVPMLADRTFAQFSQDIGLASLGASDEEIEKLSTLYWFTVEFGLCKQNGEVKAYGAGLLSSYGELLHCLSEEPEIRAFDPEAAAVQPYQDQTYQSVYFVSESFSDAKDKLRSYASRIQRPFSVKFDPYTLAIDVLDSPQAVRRSLEGVQDELDTLAHALSAIG.

Residue Ser-19 is modified to Phosphoserine; by CaMK2. Residues 33 to 65 form a disordered region; it reads GQGAPGPSLTGSPWPGTAAPAASYTPTPRSPRF. A compositionally biased stretch (low complexity) spans 47 to 59; sequence PGTAAPAASYTPT. Position 62 is a phosphoserine (Ser-62). Residue Ser-71 is modified to Phosphoserine; by CaMK2 and PKA. Positions 361, 366, and 406 each coordinate Fe cation. The residue at position 502 (Ser-502) is a Phosphoserine.

This sequence belongs to the biopterin-dependent aromatic amino acid hydroxylase family. Homotetramer. Interacts (when phosphorylated at Ser-19) with YWHAG; one YWHAG dimer binds to one TH tetramer and this interaction may influence the phosphorylation and dephosphorylation of other sites. Interacts with NT5DC2; the interaction results in reduced phosphorylation and decreased catalytic activity of TH. The cofactor is Fe(2+). Phosphorylated on Ser-19, Ser-62 and Ser-71 by several protein kinases with different site specificities. Phosphorylation at Ser-62 and Ser-71 leads to an increase of TH activity. Phosphorylation at Ser-71 activates the enzyme and also counteracts the feedback inhibition of TH by catecholamines. Phosphorylation of Ser-19 and Ser-62 triggers the proteasomal degradation of TH through the ubiquitin-proteasome pathway. Phosphorylation at Ser-62 facilitates transport of TH from the soma to the nerve terminals via the microtubule network. Phosphorylation at Ser-19 induces the high-affinity binding to the 14-3-3 protein YWHAG; this interaction may influence the phosphorylation and dephosphorylation of other sites. Ser-19 increases the phosphorylation at Ser-71 in a hierarchical manner, leading to increased activity. Mainly expressed in the brain and adrenal glands.

Its subcellular location is the cytoplasm. It localises to the perinuclear region. The protein resides in the nucleus. The protein localises to the cell projection. It is found in the axon. Its subcellular location is the cytoplasmic vesicle. It localises to the secretory vesicle. The protein resides in the synaptic vesicle. It carries out the reaction (6R)-L-erythro-5,6,7,8-tetrahydrobiopterin + L-tyrosine + O2 = (4aS,6R)-4a-hydroxy-L-erythro-5,6,7,8-tetrahydrobiopterin + L-dopa. It participates in catecholamine biosynthesis; dopamine biosynthesis; dopamine from L-tyrosine: step 1/2. With respect to regulation, inhibited in feedback fashion by the catecholamine neurotransmitters, especially by dopamine in competition with tetrahydrobiopterin. Phosphorylation of several Ser/Thr residues in the N-terminus regulates the catalytic activity. Ser-62 and Ser-71 are readily phosphorylated to activate the catalytic activity. A Cysteine modification induced by N-ethylmaleimide (NEM), inhibits tyrosine 3-monooxygenase activity through the modification of the Cys-207. Functionally, catalyzes the conversion of L-tyrosine to L-dihydroxyphenylalanine (L-Dopa), the rate-limiting step in the biosynthesis of catecholamines, dopamine, noradrenaline, and adrenaline. Uses tetrahydrobiopterin and molecular oxygen to convert tyrosine to L-Dopa. In addition to tyrosine, is able to catalyze the hydroxylation of phenylalanine and tryptophan with lower specificity. Positively regulates the regression of retinal hyaloid vessels during postnatal development. In terms of biological role, lacks catalytic activity. This is Tyrosine 3-monooxygenase from Homo sapiens (Human).